Here is a 314-residue protein sequence, read N- to C-terminus: Ficolin-2 (314 aa).

An N-terminal signal peptide occupies residues 1-17; sequence MALGSAALFVLTLTVHA. One can recognise a Collagen-like domain in the interval 40–96; the sequence is GCPGLPGAAGPKGEAGAKGDRGESGLPGIPGKEGPTGPKGNQGEKGIRGEKGDSGPS. The interval 49 to 101 is disordered; that stretch reads GPKGEAGAKGDRGESGLPGIPGKEGPTGPKGNQGEKGIRGEKGDSGPSQSCAT. The region spanning 97–314 is the Fibrinogen C-terminal domain; it reads QSCATGPRTC…KVSEMKVRLI (218 aa). 2 disulfides stabilise this stretch: cysteine 99/cysteine 127 and cysteine 106/cysteine 134. Ca(2+) contacts are provided by aspartate 250, aspartate 252, serine 254, and serine 256. Cysteines 258 and 271 form a disulfide. N-linked (GlcNAc...) asparagine glycosylation occurs at asparagine 301.

It belongs to the ficolin lectin family. In terms of assembly, homotrimer. Interacts with elastin. Interacts with MASP1 and MASP2.

It localises to the secreted. Its function is as follows. May function in innate immunity through activation of the lectin complement pathway. Calcium-dependent and GlcNAc-binding lectin. In Mus musculus (Mouse), this protein is Ficolin-2 (Fcn2).